Consider the following 369-residue polypeptide: Glutamate 5-kinase (369 aa).

Lysine 9 contacts ATP. 3 residues coordinate substrate: serine 49, aspartate 136, and asparagine 148. Residues 168–169 (TD) and 210–216 (TGGMLTK) contribute to the ATP site. Residues 275–355 (RGSVYVDEGA…KGVFIHRDDW (81 aa)) form the PUA domain.

This sequence belongs to the glutamate 5-kinase family.

Its subcellular location is the cytoplasm. It catalyses the reaction L-glutamate + ATP = L-glutamyl 5-phosphate + ADP. It functions in the pathway amino-acid biosynthesis; L-proline biosynthesis; L-glutamate 5-semialdehyde from L-glutamate: step 1/2. In terms of biological role, catalyzes the transfer of a phosphate group to glutamate to form L-glutamate 5-phosphate. The sequence is that of Glutamate 5-kinase from Neisseria meningitidis serogroup B (strain ATCC BAA-335 / MC58).